We begin with the raw amino-acid sequence, 92 residues long: Long neurotoxin 1 (92 aa).

The signal sequence occupies residues 1-21 (MKTLLLTLVVVTIVCLDLGYT). Intrachain disulfides connect Cys-24/Cys-42, Cys-35/Cys-63, Cys-67/Cys-79, and Cys-80/Cys-85.

The protein belongs to the three-finger toxin family. Long-chain subfamily. Type II alpha-neurotoxin sub-subfamily. As to expression, expressed by the venom gland.

The protein resides in the secreted. Its function is as follows. Binds with high affinity to muscular (alpha-1/CHRNA1) and neuronal (alpha-7/CHRNA7) nicotinic acetylcholine receptor (nAChR) and inhibits acetylcholine from binding to the receptor, thereby impairing neuromuscular and neuronal transmission. In Oxyuranus scutellatus scutellatus (Australian taipan), this protein is Long neurotoxin 1.